A 424-amino-acid polypeptide reads, in one-letter code: Inhibin beta A chain (424 aa).

An N-terminal signal peptide occupies residues 1 to 20 (MPLLWKRGFLLVICWIIVRS). Positions 21–308 (SPTPGSEGHS…EDRQHRRRER (288 aa)) are excised as a propeptide. An N-linked (GlcNAc...) asparagine glycan is attached at Asn165. 2 disordered regions span residues 178–200 (QQRQPKGNSEAAEDMEDMGLKGE) and 260–288 (KKKKEDDGEGKEKDGGELTGEEEKEQSHR). A compositionally biased stretch (basic and acidic residues) spans 263 to 275 (KEDDGEGKEKDGG). Cystine bridges form between Cys312/Cys320, Cys319/Cys389, Cys348/Cys421, and Cys352/Cys423.

It belongs to the TGF-beta family. In terms of assembly, dimeric, linked by one or more disulfide bonds. Inhibin A is a dimer of alpha and beta-A. Inhibin B is a dimer of alpha and beta-B. Activin A is a homodimer of beta-A. Activin B is a homodimer of beta-B. Activin AB is a dimer of beta-A and beta-B. In terms of tissue distribution, ciliary ganglion neurons. Levels are higher in the choroid than the iris.

Its subcellular location is the secreted. Functionally, inhibins and activins inhibit and activate, respectively, the secretion of follitropin by the pituitary gland. Inhibins/activins are involved in regulating a number of diverse functions such as hypothalamic and pituitary hormone secretion, gonadal hormone secretion, germ cell development and maturation, erythroid differentiation, insulin secretion, nerve cell survival, embryonic axial development or bone growth, depending on their subunit composition. Inhibins appear to oppose the functions of activins. Induces somatostatin in the ciliary ganglion neurons and may play a role in regulating neurotransmitter phenotype. The sequence is that of Inhibin beta A chain (INHBA) from Gallus gallus (Chicken).